Here is a 370-residue protein sequence, read N- to C-terminus: Asporin (370 aa).

An N-terminal signal peptide occupies residues 1-15 (MKVYVLLVFLTLCSA). Ser-45 carries an O-linked (GalNAc...) serine glycan. Positions 56 to 92 (FFPFDLFSTCPFGCQCYSRVVHCSDLGLSSVPSNIPF) constitute an LRRNT domain. Cystine bridges form between Cys-65/Cys-71 and Cys-69/Cys-78. LRR repeat units follow at residues 93 to 114 (DTRMVDLQNNKIKEIKENDFKG), 117 to 138 (SLYALILNNNKLTKIHPKAFLT), 141 to 163 (KLRRLYLSHNQLSEIPLNLPKSL), 164 to 183 (AELRIHDNKVKKIQKATFKG), 186 to 209 (ALHVLEMSANPLDNNGIEPGAFEG), 232 to 253 (TLLELHLDYNKISVVELEDFKR), 256 to 277 (DLQRLGLGNNRITDIENGSLAN), 280 to 302 (RVREIHLENNKLKKVPSGLQELK), 303 to 324 (YLQIIFLHSNSITKVGVNDFCP), 332 to 354 (SLYSAISLSNNPVKYWEVQPATF), and 355 to 370 (RCVLSRMSVQLGNFRK). Residue Asn-272 is glycosylated (N-linked (GlcNAc...) asparagine). A disulfide bond links Cys-323 and Cys-356.

It belongs to the small leucine-rich proteoglycan (SLRP) family. SLRP class I subfamily.

It localises to the secreted. The protein localises to the extracellular space. It is found in the extracellular matrix. The polypeptide is Asporin (ASPN) (Bos taurus (Bovine)).